A 265-amino-acid chain; its full sequence is uncharacterized protein (265 aa).

The protein localises to the mitochondrion. This is an uncharacterized protein from Paramecium tetraurelia.